The sequence spans 463 residues: tRNA (guanine(37)-N(1))-methyltransferase (463 aa).

S-adenosyl-L-methionine is bound by residues His-207, 245–246 (DL), 274–275 (DG), and Asn-305.

It belongs to the class I-like SAM-binding methyltransferase superfamily. TRM5/TYW2 family. Monomer.

It is found in the mitochondrion matrix. It localises to the nucleus. Its subcellular location is the cytoplasm. It carries out the reaction guanosine(37) in tRNA + S-adenosyl-L-methionine = N(1)-methylguanosine(37) in tRNA + S-adenosyl-L-homocysteine + H(+). Its function is as follows. Specifically methylates the N1 position of guanosine-37 in various cytoplasmic and mitochondrial tRNAs. Methylation is not dependent on the nature of the nucleoside 5' of the target nucleoside. This is the first step in the biosynthesis of wybutosine (yW), a modified base adjacent to the anticodon of tRNAs and required for accurate decoding. The chain is tRNA (guanine(37)-N(1))-methyltransferase from Pediculus humanus subsp. corporis (Body louse).